Consider the following 129-residue polypeptide: Iron-sulfur cluster assembly 1 homolog, mitochondrial (129 aa).

The transit peptide at 1–12 directs the protein to the mitochondrion; that stretch reads MSASLVRATVRA. Residues Cys57, Cys121, and Cys123 each contribute to the Fe cation site.

Belongs to the HesB/IscA family. As to quaternary structure, interacts with CRY2, but not with CRY1 (in vitro).

The protein localises to the mitochondrion. Involved in the maturation of mitochondrial 4Fe-4S proteins functioning late in the iron-sulfur cluster assembly pathway. Probably involved in the binding of an intermediate of Fe/S cluster assembly. This is Iron-sulfur cluster assembly 1 homolog, mitochondrial (Isca1) from Rattus norvegicus (Rat).